A 469-amino-acid chain; its full sequence is IAA-alanine resistance protein 1 (469 aa).

An N-terminal signal peptide occupies residues Met1–Ser28. Residues Ala33 to Asp58 form a disordered region. Residues His47 to Asp58 are compositionally biased toward basic and acidic residues. The next 2 membrane-spanning stretches (helical) occupy residues Cys114–Val134 and Trp141–His161. The segment at Gly170–Ser197 is disordered. Over residues His173 to Ser193 the composition is skewed to basic and acidic residues. Residues Leu201–Val221 traverse the membrane as a helical segment. Positions Ser228–Glu315 are disordered. Basic residues predominate over residues Gly235–Lys246. A compositionally biased stretch (basic and acidic residues) spans Lys247–Asn256. Positions Leu257–Asp279 are enriched in polar residues. Residues Ala292–Glu315 are compositionally biased toward basic and acidic residues. 3 consecutive transmembrane segments (helical) span residues Leu387–Trp407, Ser415–Ala435, and Ser448–Ile468.

This sequence belongs to the ZIP transporter (TC 2.A.5) family. KE4/Catsup subfamily.

It is found in the membrane. Functionally, may participate in auxin metabolism or response. Probable transporter. The chain is IAA-alanine resistance protein 1 (IAR1) from Arabidopsis thaliana (Mouse-ear cress).